The chain runs to 520 residues: MSSTVWILISILLATVGAVVGFFVRKSIAEAKINGAANEAKRILDEANREAEALKKEALLEAKDEIHTLRTEAELEIRDRRSELQKQENRLMQKEENLDRKDETLDKREQQLEKKEDSLVARQQQIEELESKVGELVQKQQTELERISNLTREQAKAIILGKVESEVSHEIAVMVKESEVRAKEEADKKAKEILSLAMQRCAADHVAETTVSVVNLPNDEMKGRIIGREGRNIRTLETLTGIDLIIDDTPEAVILSGFDPIRRETARIALDKLVQDGRIHPARIEEMVEKSRREVDEYIREVGEQTTFEVGVHGLHPDLIKILGRLKYRTSYGQNVLKHSMEVAYLTGLMAAELGEDEKLARRAGLLHDIGKAIDHEVEGSHVEIGVELATKYKEHPVVINSIASHHGDTEPTSIIAVLVAAADALSAARPGARSETLENYIRRLEKLEEISESYEGVEKSFAIQAGREVRILVKPDTIDDLEAHRLARDIRKRIENELDYPGHIKVTVIRETRAVEYAK.

A helical transmembrane segment spans residues 4 to 24 (TVWILISILLATVGAVVGFFV). Residues 86–116 (KQENRLMQKEENLDRKDETLDKREQQLEKKE) are disordered. A KH domain is found at 210-273 (TVSVVNLPND…ETARIALDKL (64 aa)). In terms of domain architecture, HD spans 336–429 (VLKHSMEVAY…VAAADALSAA (94 aa)).

Belongs to the RNase Y family.

Its subcellular location is the cell membrane. Functionally, endoribonuclease that initiates mRNA decay. This Bacillus cereus (strain ATCC 10987 / NRS 248) protein is Ribonuclease Y.